The primary structure comprises 260 residues: Thiamine thiazole synthase (260 aa).

NAD(+) is bound by residues S41, 60-61 (ER), G68, V131, and 159-161 (HVD). Residues D161 and H176 each coordinate Fe cation. NAD(+) is bound at residue M225. R235 is a binding site for glycine.

Belongs to the THI4 family. Homooctamer; tetramer of dimers. Fe(2+) is required as a cofactor.

The enzyme catalyses hydrogen sulfide + glycine + NAD(+) = ADP-5-ethyl-4-methylthiazole-2-carboxylate + nicotinamide + 3 H2O + H(+). The protein operates within cofactor biosynthesis; thiamine diphosphate biosynthesis. Functionally, involved in the biosynthesis of the thiazole moiety of thiamine. Catalyzes the conversion of NAD and glycine to adenosine diphosphate 5-(2-hydroxyethyl)-4-methylthiazole-2-carboxylate (ADT), an adenylated thiazole intermediate, using free sulfide as a source of sulfur. The chain is Thiamine thiazole synthase from Archaeoglobus fulgidus (strain ATCC 49558 / DSM 4304 / JCM 9628 / NBRC 100126 / VC-16).